The sequence spans 473 residues: GTPase Der (473 aa).

EngA-type G domains follow at residues 3-167 (FKVA…KGLE) and 203-378 (LRVA…TFWN). Residues 9–16 (GRPNVGKS), 56–60 (DTAGL), 119–122 (NKCE), 209–216 (GRPNVGKS), 256–260 (DTAGM), and 321–324 (NKWD) contribute to the GTP site. The 85-residue stretch at 379 to 463 (ARVPTARLNR…PIRLFMRKTH (85 aa)) folds into the KH-like domain.

This sequence belongs to the TRAFAC class TrmE-Era-EngA-EngB-Septin-like GTPase superfamily. EngA (Der) GTPase family. As to quaternary structure, associates with the 50S ribosomal subunit.

Its function is as follows. GTPase that plays an essential role in the late steps of ribosome biogenesis. This Parvibaculum lavamentivorans (strain DS-1 / DSM 13023 / NCIMB 13966) protein is GTPase Der.